Reading from the N-terminus, the 610-residue chain is UvrABC system protein C (610 aa).

Positions 13-91 (HLPGVYRMYD…IKENQPKYNV (79 aa)) constitute a GIY-YIG domain. A UVR domain is found at 201–236 (GQVVEHLVQKMENAAQELDFEAAARFRDQIQSVRAV).

It belongs to the UvrC family. Interacts with UvrB in an incision complex.

Its subcellular location is the cytoplasm. In terms of biological role, the UvrABC repair system catalyzes the recognition and processing of DNA lesions. UvrC both incises the 5' and 3' sides of the lesion. The N-terminal half is responsible for the 3' incision and the C-terminal half is responsible for the 5' incision. This chain is UvrABC system protein C, found in Actinobacillus pleuropneumoniae serotype 5b (strain L20).